A 217-amino-acid polypeptide reads, in one-letter code: Phosphatase MT3486 (217 aa).

Asp-9 serves as the catalytic Nucleophile.

This sequence belongs to the HAD-like hydrolase superfamily.

Able to hydrolyze geranyl diphosphate (GPP), farnesyl diphosphate (FPP) and geranylgeranyl diphosphate (GGPP) to respectively yield geraniol, farnesol and geranylgeraniol. The polypeptide is Phosphatase MT3486 (Mycobacterium tuberculosis (strain CDC 1551 / Oshkosh)).